Reading from the N-terminus, the 125-residue chain is Calcitonin gene-related peptide 1 (125 aa).

A signal peptide spans 1 to 25 (MVMLKISSFLAVYALVVCQMDSFQA). A propeptide spanning residues 26–77 (APVRPGLESITDRVTLSDYEARRLLNALVKDFIQMTAEELEQASEGNSVTAQ) is cleaved from the precursor. Cysteines 81 and 86 form a disulfide. At F116 the chain carries Phenylalanine amide. Residues 122 to 125 (SVQI) constitute a propeptide that is removed on maturation.

Belongs to the calcitonin family.

Its subcellular location is the secreted. Its function is as follows. CGRP1/CALCA is a peptide hormone that induces vasodilation mediated by the CALCRL-RAMP1 receptor complex. Dilates a variety of vessels including the coronary, cerebral and systemic vasculature. Its abundance in the CNS also points toward a neurotransmitter or neuromodulator role. It also elevates platelet cAMP. CGRP1 can also bind and activate CALCR-RAMP1 (AMYR1) receptor complex. The polypeptide is Calcitonin gene-related peptide 1 (CALCA) (Gallus gallus (Chicken)).